The following is a 492-amino-acid chain: DEAD-box ATP-dependent RNA helicase RhpA (492 aa).

A Q motif motif is present at residues 20–48 (PSFNDLGLKESVLKSVYEAGFTSPSPIQE). The region spanning 51–220 (IPAVLQGRDV…DKILENPIKI (170 aa)) is the Helicase ATP-binding domain. 64–71 (AQTGTGKT) is an ATP binding site. The short motif at 168–171 (DESD) is the DEAD box element. The 163-residue stretch at 231–393 (DITQRFYVIN…EIPTINENQI (163 aa)) folds into the Helicase C-terminal domain. The tract at residues 445–492 (AIQNPKEKTPKPSHKKTPQHERARSFKKGQHRDRHPKTNHHSKKPKRR) is disordered. The span at 469 to 492 (SFKKGQHRDRHPKTNHHSKKPKRR) shows a compositional bias: basic residues.

The protein belongs to the DEAD box helicase family. Homodimer. Interacts with RNase J (rnj), might be a member of a minimal RNA degradosome complex.

Its subcellular location is the cytoplasm. The enzyme catalyses ATP + H2O = ADP + phosphate + H(+). In terms of biological role, DEAD-box RNA helicase probably involved in RNA degradation. Unwinds dsRNA in both 5'- and 3'-directions. Background RNA-dependent ATPase activity is stimulated about 5-fold by RNaseJ (rnj). Stimulates the dsRNase activity of RNase J. In Helicobacter pylori (strain B128), this protein is DEAD-box ATP-dependent RNA helicase RhpA (rhpA).